The chain runs to 201 residues: Holliday junction branch migration complex subunit RuvA (201 aa).

The interval 1-64 is domain I; that stretch reads MYEYIRGQFQ…EDFIGLYGFT (64 aa). The tract at residues 65-143 is domain II; that stretch reads TKEELEMFKL…PDELTSEEEQ (79 aa). A flexible linker region spans residues 144-152; that stretch reads LIEGINDNS. The interval 153 to 201 is domain III; that stretch reads DYSFNINETLSALMALGYTEKEAQKALEKVDKTLSIENMIKESLKLLMR.

The protein belongs to the RuvA family. In terms of assembly, homotetramer. Forms an RuvA(8)-RuvB(12)-Holliday junction (HJ) complex. HJ DNA is sandwiched between 2 RuvA tetramers; dsDNA enters through RuvA and exits via RuvB. An RuvB hexamer assembles on each DNA strand where it exits the tetramer. Each RuvB hexamer is contacted by two RuvA subunits (via domain III) on 2 adjacent RuvB subunits; this complex drives branch migration. In the full resolvosome a probable DNA-RuvA(4)-RuvB(12)-RuvC(2) complex forms which resolves the HJ.

Its subcellular location is the cytoplasm. Functionally, the RuvA-RuvB-RuvC complex processes Holliday junction (HJ) DNA during genetic recombination and DNA repair, while the RuvA-RuvB complex plays an important role in the rescue of blocked DNA replication forks via replication fork reversal (RFR). RuvA specifically binds to HJ cruciform DNA, conferring on it an open structure. The RuvB hexamer acts as an ATP-dependent pump, pulling dsDNA into and through the RuvAB complex. HJ branch migration allows RuvC to scan DNA until it finds its consensus sequence, where it cleaves and resolves the cruciform DNA. The protein is Holliday junction branch migration complex subunit RuvA of Clostridium perfringens (strain SM101 / Type A).